An 807-amino-acid chain; its full sequence is Glycerol-3-phosphate acyltransferase (807 aa).

Residues 308 to 313 (CHRSHM) carry the HXXXXD motif motif.

It belongs to the GPAT/DAPAT family.

It is found in the cell inner membrane. The catalysed reaction is sn-glycerol 3-phosphate + an acyl-CoA = a 1-acyl-sn-glycero-3-phosphate + CoA. It functions in the pathway phospholipid metabolism; CDP-diacylglycerol biosynthesis; CDP-diacylglycerol from sn-glycerol 3-phosphate: step 1/3. This is Glycerol-3-phosphate acyltransferase from Shewanella loihica (strain ATCC BAA-1088 / PV-4).